We begin with the raw amino-acid sequence, 436 residues long: ATP-dependent protease ATPase subunit HslU (436 aa).

Residues isoleucine 19, 61–65, aspartate 249, glutamate 314, and arginine 386 contribute to the ATP site; that span reads GVGKT.

Belongs to the ClpX chaperone family. HslU subfamily. As to quaternary structure, a double ring-shaped homohexamer of HslV is capped on each side by a ring-shaped HslU homohexamer. The assembly of the HslU/HslV complex is dependent on binding of ATP.

The protein localises to the cytoplasm. In terms of biological role, ATPase subunit of a proteasome-like degradation complex; this subunit has chaperone activity. The binding of ATP and its subsequent hydrolysis by HslU are essential for unfolding of protein substrates subsequently hydrolyzed by HslV. HslU recognizes the N-terminal part of its protein substrates and unfolds these before they are guided to HslV for hydrolysis. The polypeptide is ATP-dependent protease ATPase subunit HslU (Bartonella tribocorum (strain CIP 105476 / IBS 506)).